Consider the following 142-residue polypeptide: HTH-type transcriptional regulator MntR (142 aa).

The HTH dtxR-type domain occupies 1 to 63 (MPTPSMEDYI…YEKYRGLILT (63 aa)). 6 residues coordinate Mn(2+): Asp8, Glu11, His77, Glu99, Glu102, and His103.

The protein belongs to the DtxR/MntR family. Homodimer.

Its subcellular location is the cytoplasm. Its activity is regulated as follows. DNA binding is strongly activated by Mn(2+). Functionally, central regulator of manganese homeostasis. This chain is HTH-type transcriptional regulator MntR, found in Listeria innocua serovar 6a (strain ATCC BAA-680 / CLIP 11262).